Reading from the N-terminus, the 481-residue chain is Endoplasmic reticulum lectin 1 (481 aa).

Positions 1-27 (MRRSDRLRCAGASLLVVLCGVFRSSFG) are cleaved as a signal peptide. MRH domains are found at residues 108–245 (SSCS…LCNH) and 340–467 (SYCF…ICKI). 6 disulfides stabilise this stretch: cysteine 110–cysteine 123, cysteine 198–cysteine 231, cysteine 214–cysteine 243, cysteine 342–cysteine 355, cysteine 419–cysteine 453, and cysteine 434–cysteine 465.

The protein resides in the endoplasmic reticulum lumen. Its function is as follows. Probable lectin that binds selectively to improperly folded lumenal proteins. May function in endoplasmic reticulum quality control and endoplasmic reticulum-associated degradation (ERAD) of both non-glycosylated proteins and glycoproteins. This chain is Endoplasmic reticulum lectin 1 (erlec1), found in Xenopus tropicalis (Western clawed frog).